Here is a 342-residue protein sequence, read N- to C-terminus: Platelet-activating factor receptor (342 aa).

Residues 1–16 are Extracellular-facing; it reads MEPHDSSHMDSEFRYT. Residues 17 to 38 form a helical membrane-spanning segment; it reads LFPIVYSIIFVLGVIANGYVLW. Residues 39–54 lie on the Cytoplasmic side of the membrane; sequence VFARLYPCKKFNEIKI. A helical transmembrane segment spans residues 55-74; the sequence is FMVNLTMADMLFLITLPLWI. At 75–91 the chain is on the extracellular side; it reads VYYQNQGNWILPKFLCN. Cys-90 and Cys-173 are joined by a disulfide. The helical transmembrane segment at 92 to 113 threads the bilayer; it reads VAGCLFFINTYCSVAFLGVITY. The Cytoplasmic segment spans residues 114–133; it reads NRFQAVTRPIKTAQANTRKR. A helical transmembrane segment spans residues 134–155; it reads GISLSLVIWVAIVGAASYFLIL. Over 156-184 the chain is Extracellular; sequence DSTNTVPDSAGSGNVTRCFEHYEKGSVPV. Asn-169 carries N-linked (GlcNAc...) asparagine glycosylation. A helical membrane pass occupies residues 185–205; it reads LIIHIFIVFSFFLVFLIILFC. Residues 206-233 are Cytoplasmic-facing; that stretch reads NLVIIRTLLMQPVQQQRNAEVKRRALWM. Residues 234 to 254 traverse the membrane as a helical segment; it reads VCTVLAVFIICFVPHHVVQLP. The Extracellular segment spans residues 255-276; the sequence is WTLAELGFQDSKFHQAINDAHQ. The helical transmembrane segment at 277–296 threads the bilayer; the sequence is VTLCLLSTNCVLDPVIYCFL. The Cytoplasmic portion of the chain corresponds to 297 to 342; the sequence is TKKFRKHLTEKFYSMRSSRKCSRATTDTVTEVVVPFNQIPGNSLKN.

Belongs to the G-protein coupled receptor 1 family. In terms of assembly, interacts with ARRB1. Expressed in the placenta, lung, left and right heart ventricles, heart atrium, leukocytes and differentiated HL-60 granulocytes.

The protein resides in the cell membrane. Functionally, receptor for platelet activating factor, a chemotactic phospholipid mediator that possesses potent inflammatory, smooth-muscle contractile and hypotensive activity. Seems to mediate its action via a G protein that activates a phosphatidylinositol-calcium second messenger system. The polypeptide is Platelet-activating factor receptor (PTAFR) (Homo sapiens (Human)).